We begin with the raw amino-acid sequence, 489 residues long: Glycogen synthase (489 aa).

ADP-alpha-D-glucose is bound at residue Arg-20.

It belongs to the glycosyltransferase 1 family. Bacterial/plant glycogen synthase subfamily.

The catalysed reaction is [(1-&gt;4)-alpha-D-glucosyl](n) + ADP-alpha-D-glucose = [(1-&gt;4)-alpha-D-glucosyl](n+1) + ADP + H(+). It participates in glycan biosynthesis; glycogen biosynthesis. Synthesizes alpha-1,4-glucan chains using ADP-glucose. In Chlorobium phaeovibrioides (strain DSM 265 / 1930) (Prosthecochloris vibrioformis (strain DSM 265)), this protein is Glycogen synthase.